Reading from the N-terminus, the 325-residue chain is Tetraacyldisaccharide 4'-kinase (325 aa).

53 to 60 (SVGGNGKT) is a binding site for ATP.

It belongs to the LpxK family.

It catalyses the reaction a lipid A disaccharide + ATP = a lipid IVA + ADP + H(+). It participates in glycolipid biosynthesis; lipid IV(A) biosynthesis; lipid IV(A) from (3R)-3-hydroxytetradecanoyl-[acyl-carrier-protein] and UDP-N-acetyl-alpha-D-glucosamine: step 6/6. Its function is as follows. Transfers the gamma-phosphate of ATP to the 4'-position of a tetraacyldisaccharide 1-phosphate intermediate (termed DS-1-P) to form tetraacyldisaccharide 1,4'-bis-phosphate (lipid IVA). This is Tetraacyldisaccharide 4'-kinase from Actinobacillus succinogenes (strain ATCC 55618 / DSM 22257 / CCUG 43843 / 130Z).